The sequence spans 130 residues: Small ribosomal subunit protein uS8 (130 aa).

Belongs to the universal ribosomal protein uS8 family. In terms of assembly, part of the 30S ribosomal subunit. Contacts proteins S5 and S12.

In terms of biological role, one of the primary rRNA binding proteins, it binds directly to 16S rRNA central domain where it helps coordinate assembly of the platform of the 30S subunit. The protein is Small ribosomal subunit protein uS8 of Shewanella loihica (strain ATCC BAA-1088 / PV-4).